A 171-amino-acid chain; its full sequence is MSQSLRPYLTAVRYSLEAALTLSNFSSQEVERHNRPEVEVPNTSAELLLQPMHISRNENEQVLIEPSVNSVRMSLMVKQADEIEQILVHKFTRFLEQRAEAFYILRRVPIPGYSISFLITNKHTESMKTGKLVDFIIEFMEDVDKEISEIKLFLNARARFVAEAYLDEFVY.

It belongs to the ARPC4 family. Component of the Arp2/3 complex composed of ARP2, ARP3, ARC40/p41-ARC, ARC35/p34-ARC, ARC18/p21-ARC, ARC19/p20-ARC and ARC16/p16-ARC.

The protein localises to the cytoplasm. The protein resides in the cytoskeleton. Its subcellular location is the actin patch. Functions as actin-binding component of the Arp2/3 complex which is involved in regulation of actin polymerization and together with an activating nucleation-promoting factor (NPF) mediates the formation of branched actin networks. Seems to contact the mother actin filament. The sequence is that of Actin-related protein 2/3 complex subunit 4 (ARC19) from Saccharomyces cerevisiae (strain ATCC 204508 / S288c) (Baker's yeast).